Consider the following 622-residue polypeptide: Modification methylase LlaI (622 aa).

This sequence belongs to the N(4)/N(6)-methyltransferase family.

It catalyses the reaction a 2'-deoxyadenosine in DNA + S-adenosyl-L-methionine = an N(6)-methyl-2'-deoxyadenosine in DNA + S-adenosyl-L-homocysteine + H(+). Functionally, an alpha subtype methylase that modifies unknown specific adenine residues, and protects the DNA from cleavage by the LlaI endonuclease. The chain is Modification methylase LlaI from Lactococcus lactis subsp. lactis (Streptococcus lactis).